A 504-amino-acid chain; its full sequence is L-amino-acid oxidase (504 aa).

The signal sequence occupies residues 1–18 (MNVFFMFSLLFLATLGSC). A disulfide bridge connects residues Cys28 and Cys191. FAD is bound by residues 61–62 (MS), 81–82 (EA), Arg89, and 105–108 (GPMR). Residue Arg108 coordinates substrate. A glycan (N-linked (GlcNAc...) asparagine) is linked at Asn190. Residue His241 participates in substrate binding. An FAD-binding site is contributed by Val279. Cys349 and Cys430 are joined by a disulfide. An N-linked (GlcNAc...) asparagine glycan is attached at Asn379. Tyr390 contacts substrate. FAD is bound by residues Glu475 and 482–487 (GWIDST). 482–483 (GW) serves as a coordination point for substrate.

This sequence belongs to the flavin monoamine oxidase family. FIG1 subfamily. In terms of assembly, homodimer; non-covalently linked. The cofactor is FAD. In terms of tissue distribution, expressed by the venom gland.

The protein localises to the secreted. It catalyses the reaction an L-alpha-amino acid + O2 + H2O = a 2-oxocarboxylate + H2O2 + NH4(+). It carries out the reaction L-leucine + O2 + H2O = 4-methyl-2-oxopentanoate + H2O2 + NH4(+). The enzyme catalyses L-phenylalanine + O2 + H2O = 3-phenylpyruvate + H2O2 + NH4(+). The catalysed reaction is L-tryptophan + O2 + H2O = indole-3-pyruvate + H2O2 + NH4(+). It catalyses the reaction L-methionine + O2 + H2O = 4-methylsulfanyl-2-oxobutanoate + H2O2 + NH4(+). It carries out the reaction L-tyrosine + O2 + H2O = 3-(4-hydroxyphenyl)pyruvate + H2O2 + NH4(+). Catalyzes an oxidative deamination of predominantly hydrophobic and aromatic L-amino acids, thus producing hydrogen peroxide that may contribute to the diverse toxic effects of this enzyme. Is highly active on L-Tyr followed by L-Phe, L-Met, L-Leu, L-Trp, and weakly active on L-Ile, L-Arg, L-Val, L-Lys, and L-Ala. Inhibits ADP- and collagen-induced platelet aggregation. This inhibition is inhibited by catalase, indicating the importance of generated H(2)O(2) for the inhibitory effect. This effect on platelets among snake L-amino-acid oxidases is however controversial, since some of them induce aggregation, whereas the other inhibit agonist-induced aggregation. In vivo, this enzyme induces a rapid, substantial and reversible increase in the paw volume of mice (edema). In addition, myofibrosis, and inflammatory cell infiltration on the paw tissue are also observed. The polypeptide is L-amino-acid oxidase (Daboia russelii (Russel's viper)).